Consider the following 95-residue polypeptide: uncharacterized protein (95 aa).

The chain crosses the membrane as a helical span at residues 29–53 (LVSTATCMAALFLRFKLIAWVAFIL).

Its subcellular location is the membrane. This is an uncharacterized protein from Schizosaccharomyces pombe (strain 972 / ATCC 24843) (Fission yeast).